The following is a 419-amino-acid chain: MIDLKFLRDNPDVVRTSQITRGEDPALVDELLSADEARRQAIQVADELRSEQKAFGKKIGQASPEDRPALLEGSNELKAKVKEAEAAQETAEQRVHDLQMKLSNVVEGAPAGGEDDFVVLEHVGEPRTFDFEPKDHLELGESLGLIDMKRGTKVSGARFYYLTGDGAMLQLGMLTLAAQKATAAGFTMMIPPVLVRPEIMAGTGFLGDHSEEIYYLERDDMYLVGTSEVALAGYHKDEIIDLNNGPVKYAGWSSCFRREAGSYGKDTRGILRVHQFDKVEMFVYCKPEEAEEQHRRLLEMEKDMLAAVEVPYRIIDVAGGDLGASAARKFDTEAWVPTQGTYRELTSTSNCTTFQGRRLQTRYRDENGKPQIAATLNGTLATTRWLVAILENNQQADGSVIVPEALRPFVGKDVLEPVK.

L-serine is bound at residue 226-228 (TSE). Residues 257-259 (RRE) and Val-273 each bind ATP. Residue Glu-280 participates in L-serine binding. 344–347 (ELTS) contacts ATP. Thr-379 serves as a coordination point for L-serine.

It belongs to the class-II aminoacyl-tRNA synthetase family. Type-1 seryl-tRNA synthetase subfamily. In terms of assembly, homodimer. The tRNA molecule binds across the dimer.

It localises to the cytoplasm. It carries out the reaction tRNA(Ser) + L-serine + ATP = L-seryl-tRNA(Ser) + AMP + diphosphate + H(+). The enzyme catalyses tRNA(Sec) + L-serine + ATP = L-seryl-tRNA(Sec) + AMP + diphosphate + H(+). It functions in the pathway aminoacyl-tRNA biosynthesis; selenocysteinyl-tRNA(Sec) biosynthesis; L-seryl-tRNA(Sec) from L-serine and tRNA(Sec): step 1/1. Its function is as follows. Catalyzes the attachment of serine to tRNA(Ser). Is also able to aminoacylate tRNA(Sec) with serine, to form the misacylated tRNA L-seryl-tRNA(Sec), which will be further converted into selenocysteinyl-tRNA(Sec). The protein is Serine--tRNA ligase of Corynebacterium efficiens (strain DSM 44549 / YS-314 / AJ 12310 / JCM 11189 / NBRC 100395).